The chain runs to 946 residues: Bifunctional glutamine synthetase adenylyltransferase/adenylyl-removing enzyme (946 aa).

Residues 1–440 form an adenylyl removase region; that stretch reads MKPLSSPLQQ…VFNELIGDDE (440 aa). Residues 449 to 946 form an adenylyl transferase region; that stretch reads SEQWRELWQD…ASWQKWLVEE (498 aa).

It belongs to the GlnE family. Requires Mg(2+) as cofactor.

It carries out the reaction [glutamine synthetase]-O(4)-(5'-adenylyl)-L-tyrosine + phosphate = [glutamine synthetase]-L-tyrosine + ADP. The enzyme catalyses [glutamine synthetase]-L-tyrosine + ATP = [glutamine synthetase]-O(4)-(5'-adenylyl)-L-tyrosine + diphosphate. Involved in the regulation of glutamine synthetase GlnA, a key enzyme in the process to assimilate ammonia. When cellular nitrogen levels are high, the C-terminal adenylyl transferase (AT) inactivates GlnA by covalent transfer of an adenylyl group from ATP to specific tyrosine residue of GlnA, thus reducing its activity. Conversely, when nitrogen levels are low, the N-terminal adenylyl removase (AR) activates GlnA by removing the adenylyl group by phosphorolysis, increasing its activity. The regulatory region of GlnE binds the signal transduction protein PII (GlnB) which indicates the nitrogen status of the cell. This is Bifunctional glutamine synthetase adenylyltransferase/adenylyl-removing enzyme from Escherichia coli O45:K1 (strain S88 / ExPEC).